A 278-amino-acid polypeptide reads, in one-letter code: Envelope glycoprotein L (278 aa).

The signal sequence occupies residues 1–30 (MCRRPDCGFSFSPGPVILLWCCLLLPIVSS). Positions 43–256 (VPAECPELTR…DKYYAGLPPE (214 aa)) constitute a gL betaherpesvirus-type domain. Cys-154 and Cys-159 are joined by a disulfide.

It belongs to the herpesviridae glycoprotein L (gL) family. Betaherpesvirinae gL subfamily. In terms of assembly, interacts with glycoprotein H (gH); this interaction is necessary for the correct processing and cell surface expression of gH. Forms the envelope pentamer complex (PC) composed of gH, gL, UL128, UL130, and UL131A. The pentamer interacts with host NRP2. Forms the envelope trimer complex composed of gH, gL, and gO. The trimer interacts with host PDGFRA. The trimer also interacts with host EPHA2.

It localises to the virion membrane. The protein localises to the host cell membrane. Its subcellular location is the host Golgi apparatus. It is found in the host trans-Golgi network. In terms of biological role, the heterodimer glycoprotein H-glycoprotein L is required for the fusion of viral and plasma membranes leading to virus entry into the host cell. Acts as a functional inhibitor of gH and maintains gH in an inhibited form. Upon binding to host integrins, gL dissociates from gH leading to activation of the viral fusion glycoproteins gB and gH. In human cytomegalovirus, forms two distincts complexes to mediate viral entry, a trimer and a pentamer at the surface of the virion envelope. The gH-gL-gO trimer is required for infection in fibroblasts by interacting with host PDGFRA, and in glioblastoma cells by interacting with host EPHA2. The gH-gL-UL128-UL130-UL131A pentamer is essential for viral entry in epithelial, endothelial and myeloid cells via interaction with host NRP2. In Human cytomegalovirus (strain 5035) (HHV-5), this protein is Envelope glycoprotein L.